Reading from the N-terminus, the 253-residue chain is Uroplakin-3b-like protein 1 (253 aa).

The N-terminal stretch at Met-1 to Ser-26 is a signal peptide. The Extracellular segment spans residues Leu-27 to Val-194. Asn-78 and Asn-130 each carry an N-linked (GlcNAc...) asparagine glycan. Residues Ile-195–Ile-215 form a helical membrane-spanning segment. Topologically, residues Phe-216–Ser-253 are cytoplasmic.

Belongs to the uroplakin-3 family.

It is found in the membrane. This is Uroplakin-3b-like protein 1 from Bos taurus (Bovine).